Here is a 192-residue protein sequence, read N- to C-terminus: Natural cytotoxicity triggering receptor 3 (192 aa).

An N-terminal signal peptide occupies residues 1–18 (MAKVLLIVFIMVYAGSCA). An Ig-like domain is found at 19-126 (IWVSQPPEIR…VGTGNGTRLV (108 aa)). At 19–147 (IWVSQPPEIR…AEPERAAYTS (129 aa)) the chain is on the extracellular side. Cys-39 and Cys-108 are disulfide-bonded. Asn-42 and Asn-121 each carry an N-linked (GlcNAc...) asparagine glycan. The chain crosses the membrane as a helical span at residues 148-168 (LLLRAGVYALSFLSVATGSVI). The Cytoplasmic portion of the chain corresponds to 169-192 (YYQGKCLCHVGNTATPPTASEERF).

The protein belongs to the natural cytotoxicity receptor (NCR) family. As to quaternary structure, homodimer in the unliganted form. Interacts with CD3Z. Interacts with and is activated by binding to NCR3LG1. Interacts with and is activated by binding to BAG6. Interacts with and is inhibited by binding to LGALS3.

The protein resides in the cell membrane. Cell membrane receptor of natural killer/NK cells that is activated by binding of extracellular ligands including BAG6 and NCR3LG1. Stimulates NK cells cytotoxicity toward neighboring cells producing these ligands. It controls, for instance, NK cells cytotoxicity against tumor cells. Engagement of NCR3 by BAG6 also promotes myeloid dendritic cells (DC) maturation, both through killing DCs that did not acquire a mature phenotype, and inducing the release by NK cells of TNFA and IFNG that promote DC maturation. This Rattus norvegicus (Rat) protein is Natural cytotoxicity triggering receptor 3 (Ncr3).